We begin with the raw amino-acid sequence, 182 residues long: Ribosome-recycling factor (182 aa).

The protein belongs to the RRF family.

It is found in the cytoplasm. Functionally, responsible for the release of ribosomes from messenger RNA at the termination of protein biosynthesis. May increase the efficiency of translation by recycling ribosomes from one round of translation to another. The polypeptide is Ribosome-recycling factor (Prochlorococcus marinus (strain SARG / CCMP1375 / SS120)).